Consider the following 58-residue polypeptide: Lantibiotic macedovicin (58 aa).

A propeptide spanning residues Met1–Gly25 is cleaved from the precursor. Thr33 and Thr35 each carry 2,3-didehydrobutyrine. 2 cross-links (beta-methyllanthionine (Thr-Cys)) span residues Thr33–Cys38 and Thr35–Cys57. A disulfide bridge connects residues Cys46 and Cys54.

Post-translationally, maturation of macedovicin involves the enzymatic dehydration of Thr-33 and Thr-35 into dehydrobutyrine residues, that can form a beta-methyllanthionine bond with Cys-38 and Cys-57, respectively. This is followed by membrane translocation and cleavage of the modified precursor.

The protein resides in the secreted. Lanthionine-containing peptide antibiotic (lantibiotic) active on Gram-positive bacteria. Macedovicin inhibits a broad spectrum of lactic acid bacteria, several food spoilage species (e.g. Clostridium spp.) and oral streptococci. The bactericidal activity of lantibiotics is based on depolarization of energized bacterial cytoplasmic membranes, initiated by the formation of aqueous transmembrane pores. This is Lantibiotic macedovicin from Streptococcus macedonicus (strain ACA-DC 198).